The primary structure comprises 475 residues: UDP-N-acetylmuramate--L-alanine ligase (475 aa).

Gly125–Thr131 contacts ATP.

This sequence belongs to the MurCDEF family.

It is found in the cytoplasm. The catalysed reaction is UDP-N-acetyl-alpha-D-muramate + L-alanine + ATP = UDP-N-acetyl-alpha-D-muramoyl-L-alanine + ADP + phosphate + H(+). It functions in the pathway cell wall biogenesis; peptidoglycan biosynthesis. Functionally, cell wall formation. The sequence is that of UDP-N-acetylmuramate--L-alanine ligase from Haemophilus influenzae (strain PittGG).